The sequence spans 91 residues: Conotoxin Im9.1 (91 aa).

An N-terminal signal peptide occupies residues 1–23; that stretch reads MSKVGVVPLIFLVLLSIAALQNG. A propeptide spanning residues 24-55 is cleaved from the precursor; that stretch reads DDPRRQRDEKQSPQGDILRSTLTKYSYNIQRR. 3 disulfides stabilise this stretch: cysteine 56-cysteine 72, cysteine 63-cysteine 83, and cysteine 66-cysteine 86.

Belongs to the conotoxin M superfamily. As to expression, expressed by the venom duct.

The protein resides in the secreted. Its function is as follows. Probable neurotoxin. The chain is Conotoxin Im9.1 from Conus imperialis (Imperial cone).